The sequence spans 226 residues: ATP synthase subunit a (226 aa).

5 helical membrane passes run L18–L38, F74–F94, L100–I120, L162–M182, and I187–A207.

It belongs to the ATPase A chain family. F-type ATPases have 2 components, CF(1) - the catalytic core - and CF(0) - the membrane proton channel. CF(1) has five subunits: alpha(3), beta(3), gamma(1), delta(1), epsilon(1). CF(0) has three main subunits: a, b and c.

It is found in the mitochondrion inner membrane. Mitochondrial membrane ATP synthase (F(1)F(0) ATP synthase or Complex V) produces ATP from ADP in the presence of a proton gradient across the membrane which is generated by electron transport complexes of the respiratory chain. F-type ATPases consist of two structural domains, F(1) - containing the extramembraneous catalytic core and F(0) - containing the membrane proton channel, linked together by a central stalk and a peripheral stalk. During catalysis, ATP synthesis in the catalytic domain of F(1) is coupled via a rotary mechanism of the central stalk subunits to proton translocation. Key component of the proton channel; it may play a direct role in the translocation of protons across the membrane. In Aedes aegypti (Yellowfever mosquito), this protein is ATP synthase subunit a.